We begin with the raw amino-acid sequence, 76 residues long: Protein OPG128 (76 aa).

A disulfide bridge links Cys17 with Cys21.

Belongs to the orthopoxvirus OPG128 family. In terms of assembly, interacts with sulfhydryl oxidase OPG072; this interaction involves formation of a transient disulfide-bonded intermediate, allowing disulfide bond transfer. Interacts with OPG088; this interaction involves formation of a transient disulfide-bonded intermediate, allowing disulfide bond transfer.

Its function is as follows. Late protein which probably participates in disulfide bond formation by functioning as a thiol-disulfide transfer protein between membrane-associated OPG072 and OPG08. The complete pathway for formation of disulfide bonds in intracellular virion membrane proteins sequentially involves oxidation of OPG072, OPG128 and OPG08. The chain is Protein OPG128 (OPG128) from Variola virus (isolate Human/India/Ind3/1967) (VARV).